A 160-amino-acid chain; its full sequence is Transcription elongation factor GreA (160 aa).

A coiled-coil region spans residues 1 to 72 (MAEKTYPMTL…QISSLETKIR (72 aa)).

Belongs to the GreA/GreB family.

Its function is as follows. Necessary for efficient RNA polymerase transcription elongation past template-encoded arresting sites. The arresting sites in DNA have the property of trapping a certain fraction of elongating RNA polymerases that pass through, resulting in locked ternary complexes. Cleavage of the nascent transcript by cleavage factors such as GreA or GreB allows the resumption of elongation from the new 3'terminus. GreA releases sequences of 2 to 3 nucleotides. This is Transcription elongation factor GreA from Streptococcus pneumoniae serotype 4 (strain ATCC BAA-334 / TIGR4).